The sequence spans 172 residues: MAVRPIIRFPSPLLTTSAERIGRFDGTLRQLSDDLVDTMRAAPGIGITASHIGILQRLTVIEVDPQTGPRSFVNPEIVWQSSETAWHTEGSVSMPGVAEEVERPVRVRVSFQTLDGETREEEAEGLMAVCLQHEIDQLNGIFWIRRLSRLKRERAVKRFEKFNRAEAFPGTQ.

E134 is an active-site residue.

The protein belongs to the polypeptide deformylase family.

The sequence is that of Peptide deformylase-like from Rhizobium meliloti (strain 1021) (Ensifer meliloti).